Reading from the N-terminus, the 218-residue chain is Glycerol-3-phosphate acyltransferase (218 aa).

A run of 5 helical transmembrane segments spans residues 10–30, 60–80, 88–108, 125–145, and 165–185; these read LTLG…FGLI, DLAA…VLLA, PAII…PVWL, SAAW…AFLF, and AFDQ…LIFI.

The protein belongs to the PlsY family. In terms of assembly, probably interacts with PlsX.

It is found in the cell inner membrane. It catalyses the reaction an acyl phosphate + sn-glycerol 3-phosphate = a 1-acyl-sn-glycero-3-phosphate + phosphate. It participates in lipid metabolism; phospholipid metabolism. Its function is as follows. Catalyzes the transfer of an acyl group from acyl-phosphate (acyl-PO(4)) to glycerol-3-phosphate (G3P) to form lysophosphatidic acid (LPA). This enzyme utilizes acyl-phosphate as fatty acyl donor, but not acyl-CoA or acyl-ACP. This Caulobacter vibrioides (strain ATCC 19089 / CIP 103742 / CB 15) (Caulobacter crescentus) protein is Glycerol-3-phosphate acyltransferase.